The chain runs to 419 residues: DNA primase DnaG (419 aa).

The Toprim domain occupies 168–244; sequence DTIIVVEGRS…KVDYVARAPE (77 aa). Residues Glu-174, Asp-218, and Asp-220 each coordinate Mg(2+). 2 stretches are compositionally biased toward basic and acidic residues: residues 280–291 and 306–316; these read KPAEEAVKREEE and KAAKPPEEKPP. Positions 280–317 are disordered; it reads KPAEEAVKREEEAAAEAKPPAPAVQEKAAKPPEEKPPT.

Belongs to the archaeal DnaG primase family. Forms a ternary complex with MCM helicase and DNA. Component of the archaeal exosome complex. Mg(2+) serves as cofactor.

The catalysed reaction is ssDNA + n NTP = ssDNA/pppN(pN)n-1 hybrid + (n-1) diphosphate.. Its function is as follows. RNA polymerase that catalyzes the synthesis of short RNA molecules used as primers for DNA polymerase during DNA replication. Also part of the exosome, which is a complex involved in RNA degradation. Acts as a poly(A)-binding protein that enhances the interaction between heteromeric, adenine-rich transcripts and the exosome. In Aeropyrum pernix (strain ATCC 700893 / DSM 11879 / JCM 9820 / NBRC 100138 / K1), this protein is DNA primase DnaG.